Consider the following 230-residue polypeptide: Flagellar L-ring protein (230 aa).

Positions 1-26 (MKQVRLLPSATVRAACAVAVAAFAAG) are cleaved as a signal peptide. Cysteine 27 is lipidated: N-palmitoyl cysteine. Cysteine 27 carries S-diacylglycerol cysteine lipidation.

The protein belongs to the FlgH family. In terms of assembly, the basal body constitutes a major portion of the flagellar organelle and consists of four rings (L,P,S, and M) mounted on a central rod.

The protein resides in the cell outer membrane. It localises to the bacterial flagellum basal body. Assembles around the rod to form the L-ring and probably protects the motor/basal body from shearing forces during rotation. The polypeptide is Flagellar L-ring protein (Burkholderia lata (strain ATCC 17760 / DSM 23089 / LMG 22485 / NCIMB 9086 / R18194 / 383)).